The following is a 64-amino-acid chain: uncharacterized protein (64 aa).

Residues 1 to 64 are disordered; the sequence is MNNPNIVPPH…QNQPPQRPQY (64 aa). The segment covering 8-32 has biased composition (low complexity); sequence PPHFNQHQQQNHNQNQPPHHMNNPN.

This is an uncharacterized protein from Dictyostelium discoideum (Social amoeba).